A 726-amino-acid chain; its full sequence is Cyclin-T1 (726 aa).

Ser117 bears the Phosphoserine mark. The Nuclear localization signal, and interaction with Tat-TAR RNA motif lies at 253 to 270 (KRIWNWRACEAAKKTKAD). Ser340 bears the Phosphoserine mark. A Glycyl lysine isopeptide (Lys-Gly) (interchain with G-Cter in SUMO2) cross-link involves residue Lys342. The tract at residues 360 to 385 (VDHSLPQDGSNAFISQKQNSKSVPSA) is disordered. Residues 366–382 (QDGSNAFISQKQNSKSV) show a composition bias toward polar residues. The stretch at 384 to 425 (SAKVSLKEYRAKHAEELAAQKRQLENMEANVKSQYAYAAQNL) forms a coiled coil. Ser388 carries the post-translational modification Phosphoserine. At Lys390 the chain carries N6-acetyllysine. Lys415 participates in a covalent cross-link: Glycyl lysine isopeptide (Lys-Gly) (interchain with G-Cter in SUMO2). An ADP-ribosylserine mark is found at Ser416, Ser474, and Ser475. Residues 480 to 550 (IKMRIKVHAA…RPGDPKHSSQ (71 aa)) are histidine-rich domain (HRD). Lys481 is covalently cross-linked (Glycyl lysine isopeptide (Lys-Gly) (interchain with G-Cter in SUMO2)). The residue at position 485 (Lys485) is an N6-(ADP-ribosyl)lysine. Residue His487 is modified to ADP-ribosylhistidine. Residues 487–506 (HAAADKHNSVEDSVTKSREH) show a composition bias toward basic and acidic residues. 2 disordered regions span residues 487–650 (HAAA…NGHN) and 688–726 (SDYL…PLPK). Ser495 and Ser499 each carry phosphoserine. Basic residues predominate over residues 507-530 (KEKHKTHPSNHHHHHNHHSHKHSH). The tract at residues 527–570 (KHSHSQLPVGTGNKRPGDPKHSSQTSNLAHKTYSLSSSFSSSSS) is required for interaction with ZMYND8. The residue at position 530 (His530) is an ADP-ribosylhistidine. Residues Ser531, Ser549, and Ser552 each carry the ADP-ribosylserine modification. At His556 the chain carries ADP-ribosylhistidine. Residues 560–570 (SLSSSFSSSSS) show a composition bias toward low complexity. Ser563 bears the ADP-ribosylserine mark. Phosphoserine occurs at positions 564 and 577. Residues 594–609 (STKSSSLNFSFPSLPT) show a composition bias toward low complexity. The span at 615–630 (GHSSDTSGLSFSQPSC) shows a compositional bias: polar residues. At Ser637 the chain carries ADP-ribosylserine. The span at 710 to 726 (PPPLPSEPPPPLPPLPK) shows a compositional bias: pro residues.

This sequence belongs to the cyclin family. Cyclin C subfamily. As to quaternary structure, cyclin-T1 is the predominant cyclin that associates with CDK9 to form a heterodimer called P-TEFb. P-TEFb forms a complex with AFF4/AF5Q31. Component of a complex which is at least composed of HTATSF1/Tat-SF1, P-TEFb complex, RNA pol II, SUPT5H, and NCL/nucleolin. Component of the 7SK snRNP complex at least composed of P-TEFb (composed of CDK9 and CCNT1/cyclin-T1), HEXIM1, HEXIM2, BCDIN3, SART3 proteins and 7SK and U6 snRNAs. Interacts (via central region) with ZMYND8 (via N-terminus); the interaction is direct and the association appears to occur between homodimeric ZMYND8 and the activated form of the P-TEFb complex. Interacts with BRD4, targets chromatin binding. Interacts with JMJD6. Interacts with MDFIC. Interacts with HSF1. Interacts with HTATSF1. Interacts with TBX21. In terms of assembly, (Microbial infection) Interacts with the transactivation region of HIV-1, HIV-2 and SIV Tat. (Microbial infection) Interacts with human herpes virus 1 (HHV-1) transcriptional regulator ICP22. ADP-ribosylation on serine residues by PARP1 in response to DNA damage disrupts the phase separation activity of CCNT1, thereby preventing activation of CDK9. In terms of tissue distribution, ubiquitously expressed.

The protein resides in the nucleus. Regulatory subunit of the cyclin-dependent kinase pair (CDK9/cyclin-T1) complex, also called positive transcription elongation factor B (P-TEFb), which facilitates the transition from abortive to productive elongation by phosphorylating the CTD (C-terminal domain) of the large subunit of RNA polymerase II (RNA Pol II). Required to activate the protein kinase activity of CDK9: acts by mediating formation of liquid-liquid phase separation (LLPS) that enhances binding of P-TEFb to the CTD of RNA Pol II. In terms of biological role, (Microbial infection) In case of HIV or SIV infections, binds to the transactivation domain of the viral nuclear transcriptional activator, Tat, thereby increasing Tat's affinity for the transactivating response RNA element (TAR RNA). Serves as an essential cofactor for Tat, by promoting RNA Pol II activation, allowing transcription of viral genes. The chain is Cyclin-T1 (CCNT1) from Homo sapiens (Human).